The following is a 219-amino-acid chain: Large ribosomal subunit protein uL16y (219 aa).

Belongs to the universal ribosomal protein uL16 family. In terms of assembly, component of the small ribosomal subunit. Mature ribosomes consist of a small (40S) and a large (60S) subunit. The 40S subunit contains about 33 different proteins and 1 molecule of RNA (18S). The 60S subunit contains about 49 different proteins and 3 molecules of RNA (25S, 5.8S and 5S).

The polypeptide is Large ribosomal subunit protein uL16y (SG12) (Oryza sativa subsp. japonica (Rice)).